The primary structure comprises 118 residues: UPF0295 protein BC_0520 (118 aa).

Helical transmembrane passes span 12 to 32 (IRTFALSLVFIGLFIAYLGVF) and 43 to 63 (FMMVGFLAVIASTVVYFWIGM).

The protein belongs to the UPF0295 family.

The protein localises to the cell membrane. In Bacillus cereus (strain ATCC 14579 / DSM 31 / CCUG 7414 / JCM 2152 / NBRC 15305 / NCIMB 9373 / NCTC 2599 / NRRL B-3711), this protein is UPF0295 protein BC_0520.